The sequence spans 314 residues: Ketimine reductase mu-crystallin (314 aa).

R47 is a 3,3',5-triiodo-L-thyronine binding site. Positions 91, 92, 119, 144, 146, 147, 168, 169, 170, 173, 205, and 206 each coordinate NADPH. E257 provides a ligand contact to 3,3',5-triiodo-L-thyronine. S292 is a binding site for NADPH.

This sequence belongs to the ornithine cyclodeaminase/mu-crystallin family. In terms of assembly, homodimer. Binds the thyroid hormone triiodothyronine (T3); T3 binding inhibits enzymatic activity.

The protein resides in the cytoplasm. It carries out the reaction L-pipecolate + NAD(+) = Delta(1)-piperideine-2-carboxylate + NADH + H(+). The catalysed reaction is L-pipecolate + NADP(+) = Delta(1)-piperideine-2-carboxylate + NADPH + H(+). It catalyses the reaction L-proline + NADP(+) = 1-pyrroline-2-carboxylate + NADPH + H(+). The enzyme catalyses L-proline + NAD(+) = 1-pyrroline-2-carboxylate + NADH + H(+). It carries out the reaction (3R)-1,4-thiomorpholine-3-carboxylate + NAD(+) = 3,4-dehydrothiomorpholine-3-carboxylate + NADH + 2 H(+). The catalysed reaction is (3R)-1,4-thiomorpholine-3-carboxylate + NADP(+) = 3,4-dehydrothiomorpholine-3-carboxylate + NADPH + 2 H(+). It catalyses the reaction (S)-cystathionine ketimine + NADH + 2 H(+) = (3R,5S)-2,3,5,6,7-pentahydro-1,4-thiazepine-3,5-dicarboxylate + NAD(+). The enzyme catalyses (S)-cystathionine ketimine + NADPH + 2 H(+) = (3R,5S)-2,3,5,6,7-pentahydro-1,4-thiazepine-3,5-dicarboxylate + NADP(+). It carries out the reaction (R)-lanthionine ketimine + NADPH + 2 H(+) = (3R,5R)-1,4-thiomorpholine-3,5-dicarboxylate + NADP(+). The catalysed reaction is Delta(2)-thiazoline-2-carboxylate + NADPH + 2 H(+) = L-thiazolidine-2-carboxylate + NADP(+). Functionally, catalyzes the NAD(P)H-dependent reduction of imine double bonds of a number of cyclic ketimine substrates, including sulfur-containing cyclic ketimines. Under physiological conditions, it efficiently catalyzes delta(1)-piperideine-2-carboxylate (P2C) and delta(1)-pyrroline-2-carboxylate (Pyr2C) reduction, suggesting a central role in lysine and glutamate metabolism. Additional substrates are (S)-cystathionine ketimine (CysK), 3,4-dehydrothiomorpholine-3-carboxylate (AECK), and (R)-lanthionine ketimine (LK) that is reduced at very low rate compared to other substrates. Also catalyzes the NAD(P)H-dependent reduction of delta(2)-thiazoline-2-carboxylate (T2C). The chain is Ketimine reductase mu-crystallin (CRYM) from Bos taurus (Bovine).